The sequence spans 374 residues: Outer membrane protein assembly factor BamC (374 aa).

A signal peptide spans 1-22; sequence MSKFYKSGRVTTAVIVALSLSA. The N-palmitoyl cysteine moiety is linked to residue C23. A lipid anchor (S-diacylglycerol cysteine) is attached at C23.

Belongs to the BamC family. Part of the Bam complex.

It is found in the cell outer membrane. Part of the outer membrane protein assembly complex, which is involved in assembly and insertion of beta-barrel proteins into the outer membrane. This chain is Outer membrane protein assembly factor BamC, found in Psychromonas ingrahamii (strain DSM 17664 / CCUG 51855 / 37).